Consider the following 457-residue polypeptide: Asparagine--tRNA ligase (457 aa).

This sequence belongs to the class-II aminoacyl-tRNA synthetase family. In terms of assembly, homodimer.

It localises to the cytoplasm. It carries out the reaction tRNA(Asn) + L-asparagine + ATP = L-asparaginyl-tRNA(Asn) + AMP + diphosphate + H(+). In Phytoplasma australiense, this protein is Asparagine--tRNA ligase.